The primary structure comprises 147 residues: MVHLTGEEKAAVTALWGKVNVDEVGGEALGRLLVVYPWTQRFFDSFGDLSSPDAVMNNPKVKAHGKKVLGAFSDGLAHLDNLKGTFAQLSELHCDKLHVXPENFRLLGNVLVCVLAHHFGKEFTPQVQAAYQKVVAGVANALAHKYH.

At Val2 the chain carries N-acetylvaline. One can recognise a Globin domain in the interval 3-147 (HLTGEEKAAV…VANALAHKYH (145 aa)). Phosphothreonine is present on Thr13. Residue Ser45 is modified to Phosphoserine. Lys60 is subject to N6-acetyllysine. A heme b-binding site is contributed by His64. The residue at position 83 (Lys83) is an N6-acetyllysine. His93 provides a ligand contact to heme b. Cys94 is subject to S-nitrosocysteine. Lys145 is subject to N6-acetyllysine.

It belongs to the globin family. As to quaternary structure, heterotetramer of two alpha chains and two beta chains. In terms of tissue distribution, red blood cells.

Functionally, involved in oxygen transport from the lung to the various peripheral tissues. The protein is Hemoglobin subunit beta (HBB) of Aotus azarae (Azara's night monkey).